The following is a 166-amino-acid chain: Phosphopantetheine adenylyltransferase (166 aa).

Substrate is bound at residue T9. Residues 9 to 10 (TF) and H17 contribute to the ATP site. 3 residues coordinate substrate: K41, L73, and R87. ATP-binding positions include 88–90 (GLR), E98, and 123–129 (YQFISGT).

It belongs to the bacterial CoaD family. In terms of assembly, homohexamer. The cofactor is Mg(2+).

It is found in the cytoplasm. The catalysed reaction is (R)-4'-phosphopantetheine + ATP + H(+) = 3'-dephospho-CoA + diphosphate. The protein operates within cofactor biosynthesis; coenzyme A biosynthesis; CoA from (R)-pantothenate: step 4/5. Functionally, reversibly transfers an adenylyl group from ATP to 4'-phosphopantetheine, yielding dephospho-CoA (dPCoA) and pyrophosphate. This Burkholderia mallei (strain NCTC 10229) protein is Phosphopantetheine adenylyltransferase.